The primary structure comprises 168 residues: SsrA-binding protein (168 aa).

Residues 1–20 are disordered; that stretch reads MAAQSKQAKPSGKQGGKKII.

It belongs to the SmpB family.

The protein resides in the cytoplasm. Required for rescue of stalled ribosomes mediated by trans-translation. Binds to transfer-messenger RNA (tmRNA), required for stable association of tmRNA with ribosomes. tmRNA and SmpB together mimic tRNA shape, replacing the anticodon stem-loop with SmpB. tmRNA is encoded by the ssrA gene; the 2 termini fold to resemble tRNA(Ala) and it encodes a 'tag peptide', a short internal open reading frame. During trans-translation Ala-aminoacylated tmRNA acts like a tRNA, entering the A-site of stalled ribosomes, displacing the stalled mRNA. The ribosome then switches to translate the ORF on the tmRNA; the nascent peptide is terminated with the 'tag peptide' encoded by the tmRNA and targeted for degradation. The ribosome is freed to recommence translation, which seems to be the essential function of trans-translation. This chain is SsrA-binding protein, found in Mycobacterium ulcerans (strain Agy99).